The primary structure comprises 775 residues: 5-methyltetrahydropteroyltriglutamate--homocysteine methyltransferase (775 aa).

Residues Arg-16–Lys-19 and Lys-115 contribute to the 5-methyltetrahydropteroyltri-L-glutamate site. L-homocysteine-binding positions include Ile-435–Ser-437 and Glu-488. Residues Ile-435–Ser-437 and Glu-488 contribute to the L-methionine site. Residues Arg-519 to Cys-520 and Trp-565 contribute to the 5-methyltetrahydropteroyltri-L-glutamate site. An L-homocysteine-binding site is contributed by Asp-603. Asp-603 lines the L-methionine pocket. Position 609 (Glu-609) interacts with 5-methyltetrahydropteroyltri-L-glutamate. Zn(2+)-binding residues include His-645, Cys-647, and Glu-669. His-698 acts as the Proton donor in catalysis. Cys-730 contributes to the Zn(2+) binding site.

The protein belongs to the vitamin-B12 independent methionine synthase family. The cofactor is Zn(2+).

The catalysed reaction is 5-methyltetrahydropteroyltri-L-glutamate + L-homocysteine = tetrahydropteroyltri-L-glutamate + L-methionine. The protein operates within amino-acid biosynthesis; L-methionine biosynthesis via de novo pathway; L-methionine from L-homocysteine (MetE route): step 1/1. Its function is as follows. Catalyzes the transfer of a methyl group from 5-methyltetrahydrofolate to homocysteine resulting in methionine formation. The protein is 5-methyltetrahydropteroyltriglutamate--homocysteine methyltransferase of Coxiella burnetii (strain Dugway 5J108-111).